The chain runs to 169 residues: Small ribosomal subunit protein uS5 (169 aa).

The 64-residue stretch at 13–76 (LVEKLVSVRR…EKARRNMKDV (64 aa)) folds into the S5 DRBM domain.

Belongs to the universal ribosomal protein uS5 family. Part of the 30S ribosomal subunit. Contacts proteins S4 and S8.

Functionally, with S4 and S12 plays an important role in translational accuracy. Located at the back of the 30S subunit body where it stabilizes the conformation of the head with respect to the body. This Hydrogenovibrio crunogenus (strain DSM 25203 / XCL-2) (Thiomicrospira crunogena) protein is Small ribosomal subunit protein uS5.